A 492-amino-acid chain; its full sequence is Glutamyl-tRNA(Gln) amidotransferase subunit A (492 aa).

Catalysis depends on charge relay system residues Lys79 and Ser154. Catalysis depends on Ser178, which acts as the Acyl-ester intermediate.

It belongs to the amidase family. GatA subfamily. In terms of assembly, heterotrimer of A, B and C subunits.

The catalysed reaction is L-glutamyl-tRNA(Gln) + L-glutamine + ATP + H2O = L-glutaminyl-tRNA(Gln) + L-glutamate + ADP + phosphate + H(+). Allows the formation of correctly charged Gln-tRNA(Gln) through the transamidation of misacylated Glu-tRNA(Gln) in organisms which lack glutaminyl-tRNA synthetase. The reaction takes place in the presence of glutamine and ATP through an activated gamma-phospho-Glu-tRNA(Gln). This is Glutamyl-tRNA(Gln) amidotransferase subunit A from Acinetobacter baumannii (strain ACICU).